The chain runs to 536 residues: Caspase recruitment domain-containing protein 9 (536 aa).

Ser-2 is modified (phosphoserine). Positions 3, 10, and 73 each coordinate Zn(2+). The CARD domain occupies 6 to 98 (NDDECWSTLE…QLYRKVTGKE (93 aa)). A linker region spans residues 99-116 (PARVFSMIIDASGESGLT). A coiled-coil region spans residues 117–272 (QLLMTEVMKL…ELQVSVQEGK (156 aa)). Lys-125 participates in a covalent cross-link: Glycyl lysine isopeptide (Lys-Gly) (interchain with G-Cter in ubiquitin). At Thr-231 the chain carries Phosphothreonine; by PKC/PRKCD. Ser-277 carries the post-translational modification Phosphoserine. Residues 303-415 (SLRKDLRQAE…LLAAEGRLKQ (113 aa)) are a coiled coil. Ser-424, Ser-425, Ser-431, Ser-451, Ser-461, Ser-483, and Ser-498 each carry phosphoserine. Residues 425 to 451 (SDLEDSSPRNSQELSLPQDLEEDAQLS) are disordered. The segment at 476–536 (LTHGMGPSSS…GSDNTDTEGS (61 aa)) is disordered. The span at 487–502 (PPEKERRRLKESFENY) shows a compositional bias: basic and acidic residues. 2 positions are modified to phosphothreonine; by CK2: Thr-531 and Thr-533.

As to quaternary structure, monomer. Homodimer; homodimerization is mediated by the CARD domain which forms an extensive interaction with the adjacent linker and coiled-coil regions; leads to an autoinhibited state. Homomultimer; polymerizes following activation, forming a nucleating helical template that seeds BCL10-filament formation via a CARD-CARD interaction. Interacts (via CARD domain) with BCL10 (via CARD domain); interaction takes place following CARD9 activation and polymerization, leading to the formation of a filamentous CBM complex assembly. Component of a CBM complex (CARD9-BCL10, MALT1), composed of CARD9, BCL10 and MALT1. Interacts with RASGRF1. Interacts with NOD2 (via NACHT domain); interaction is direct. Interacts with RIPK2. Interacts with VHL; without leading to protein degradation. In terms of processing, phosphorylated at Thr-231 by PRKCD downstream of C-type lectin receptors activation: phosphorylation promotes interaction with BCL10, followed by activation of NF-kappa-B and MAP kinase p38 pathways. Phosphorylated at Thr-531 and Thr-531 by CK2 following interaction with VHL, leading to inhibit the ability to activate NF-kappa-B. Ubiquitinated at Lys-125 via 'Lys-27'-linked ubiquitin by TRIM62 downstream of C-type lectin receptors activation; leading to CARD9 activation, followed by activation of NF-kappa-B and MAP kinase p38 pathways. Deubiquitinated at Lys-125 by USP15, inhibiting CARD9. As to expression, specifically expressed in myeloid cells. Not expressed in non-lymphoid organs.

The protein resides in the cytoplasm. Its activity is regulated as follows. Maintained in an autoinhibited state via homodimerization in which the CARD domain forms an extensive interaction with the adjacent linker and coiled-coil regions. Activation downstream of C-type lectin receptors, by phosphorylation by PRKCD and/or ubiquitination by TRIM62, triggers disruption of the CARD domain-coiled coil interface, CARD9 homooligomerization and BCL10 recruitment, followed by activation of NF-kappa-B and MAP kinase p38 pathways. Zinc-binding inhibits activation by stabilizing the CARD ground-state conformation and restricting its capacity to form BCL10-nucleating filaments. Functionally, adapter protein that plays a key role in innate immune response against fungi by forming signaling complexes downstream of C-type lectin receptors. CARD9-mediated signals are essential for antifungal immunity against a subset of fungi from the phylum Ascomycota. Transduces signals in myeloid cells downstream of C-type lectin receptors CLEC7A (dectin-1), CLEC6A (dectin-2) and CLEC4E (Mincle), which detect pathogen-associated molecular pattern metabolites (PAMPs), such as fungal carbohydrates, and trigger CARD9 activation. Upon activation, CARD9 homooligomerizes to form a nucleating helical template that recruits BCL10 via CARD-CARD interaction, thereby promoting polymerization of BCL10 and subsequent recruitment of MALT1: this leads to activation of NF-kappa-B and MAP kinase p38 (MAPK11, MAPK12, MAPK13 and/or MAPK14) pathways which stimulate expression of genes encoding pro-inflammatory cytokines and chemokines. CARD9 signaling in antigen-presenting cells links innate sensing of fungi to the activation of adaptive immunity and provides a cytokine milieu that induces the development and subsequent of interleukin 17-producing T helper (Th17) cells. Also involved in activation of myeloid cells via classical ITAM-associated receptors and TLR: required for TLR-mediated activation of MAPK, while it is not required for TLR-induced activation of NF-kappa-B. CARD9 can also be engaged independently of BCL10: forms a complex with RASGRF1 downstream of C-type lectin receptors, which recruits and activates HRAS, leading to ERK activation and the production of cytokines. Acts as an important regulator of the intestinal commensal fungi (mycobiota) component of the gut microbiota. Plays an essential role in antifungal immunity against dissemination of gut fungi: acts by promoting induction of antifungal IgG antibodies response in CX3CR1(+) macrophages to confer protection against disseminated C.albicans or C.auris infection. Also mediates immunity against other pathogens, such as certain bacteria, viruses and parasites; CARD9 signaling is however redundant with other innate immune responses. In response to L.monocytogenes infection, required for the production of inflammatory cytokines activated by intracellular peptidoglycan: acts by connecting NOD2 recognition of peptidoglycan to downstream activation of MAP kinases (MAPK) without activating NF-kappa-B. The polypeptide is Caspase recruitment domain-containing protein 9 (Mus musculus (Mouse)).